Consider the following 253-residue polypeptide: Triosephosphate isomerase (253 aa).

Residue 9–11 participates in substrate binding; it reads NWK. Histidine 94 acts as the Electrophile in catalysis. Glutamate 163 functions as the Proton acceptor in the catalytic mechanism. Substrate-binding positions include glycine 169, serine 209, and 230 to 231; that span reads GG.

This sequence belongs to the triosephosphate isomerase family. Homodimer.

It localises to the cytoplasm. It carries out the reaction D-glyceraldehyde 3-phosphate = dihydroxyacetone phosphate. It participates in carbohydrate biosynthesis; gluconeogenesis. It functions in the pathway carbohydrate degradation; glycolysis; D-glyceraldehyde 3-phosphate from glycerone phosphate: step 1/1. Involved in the gluconeogenesis. Catalyzes stereospecifically the conversion of dihydroxyacetone phosphate (DHAP) to D-glyceraldehyde-3-phosphate (G3P). The sequence is that of Triosephosphate isomerase from Dehalococcoides mccartyi (strain CBDB1).